A 192-amino-acid chain; its full sequence is uncharacterized protein (192 aa).

Residues 1–17 (MFLHLILLAGLAPVVYL) form the signal peptide.

This is an uncharacterized protein from Caenorhabditis elegans.